A 147-amino-acid polypeptide reads, in one-letter code: Ribonuclease pancreatic gamma-type (147 aa).

Residues 1-25 form the signal peptide; it reads MGLEKSFLLFSLLVLVLGWVQPSLG. Residues K35 and R38 each contribute to the substrate site. The active-site Proton acceptor is H40. 4 disulfide bridges follow: C54-C112, C68-C123, C86-C138, and C93-C100. Substrate-binding positions include 69–73, K94, and R113; that span reads KPMNT. The active-site Proton donor is the H142.

The protein belongs to the pancreatic ribonuclease family. Monomer.

The protein resides in the secreted. It catalyses the reaction an [RNA] containing cytidine + H2O = an [RNA]-3'-cytidine-3'-phosphate + a 5'-hydroxy-ribonucleotide-3'-[RNA].. It carries out the reaction an [RNA] containing uridine + H2O = an [RNA]-3'-uridine-3'-phosphate + a 5'-hydroxy-ribonucleotide-3'-[RNA].. Endonuclease that catalyzes the cleavage of RNA on the 3' side of pyrimidine nucleotides. Acts on single-stranded and double-stranded RNA. In Rattus rattus (Black rat), this protein is Ribonuclease pancreatic gamma-type.